We begin with the raw amino-acid sequence, 661 residues long: UvrABC system protein B (661 aa).

A Helicase ATP-binding domain is found at 25 to 182; sequence AGLSSKKRSQ…NDLINLQYER (158 aa). 38-45 contributes to the ATP binding site; the sequence is GITGSGKT. A Beta-hairpin motif is present at residues 91–114; sequence YYDYYQPEAYIARTDTFIEKDSSI. The Helicase C-terminal domain maps to 430 to 592; that stretch reads QVEDLISEIQ…IIPKTINRAI (163 aa). The region spanning 621–656 is the UVR domain; it reads KTHIDKLKKEMLKAASNLEFEQAVKLRDQLKTLEEA.

It belongs to the UvrB family. Forms a heterotetramer with UvrA during the search for lesions. Interacts with UvrC in an incision complex.

It is found in the cytoplasm. In terms of biological role, the UvrABC repair system catalyzes the recognition and processing of DNA lesions. A damage recognition complex composed of 2 UvrA and 2 UvrB subunits scans DNA for abnormalities. Upon binding of the UvrA(2)B(2) complex to a putative damaged site, the DNA wraps around one UvrB monomer. DNA wrap is dependent on ATP binding by UvrB and probably causes local melting of the DNA helix, facilitating insertion of UvrB beta-hairpin between the DNA strands. Then UvrB probes one DNA strand for the presence of a lesion. If a lesion is found the UvrA subunits dissociate and the UvrB-DNA preincision complex is formed. This complex is subsequently bound by UvrC and the second UvrB is released. If no lesion is found, the DNA wraps around the other UvrB subunit that will check the other stand for damage. The protein is UvrABC system protein B of Rickettsia rickettsii (strain Sheila Smith).